The sequence spans 257 residues: MVLIRVLANLLILQLSYAQKSSELVIGGHPCNINEHPFLVLVYHDGYQCGGTLINEEWVLTAAHCDGKKMKLQFGLHSKNVPNKDKQTRVPKEKFFCLSSKNFIKWGKDIMLIRLNRPVNNSTHIAPLSLPSSPPSQNTVCNIMGWGTISPTKEIYPDVPHCANINILDHAVCRAFYPGLLEKSKTLCAGILQGGKDICQGDSGGPLICNGQIQGIVSVGGDPCAEPRVPAIYTKVFDHLDWIKSIIAGNTAATCPL.

A signal peptide spans 1-18 (MVLIRVLANLLILQLSYA). The propeptide occupies 19-24 (QKSSEL). Positions 25–248 (VIGGHPCNIN…HLDWIKSIIA (224 aa)) constitute a Peptidase S1 domain. 6 disulfides stabilise this stretch: Cys31/Cys162, Cys49/Cys65, Cys97/Cys255, Cys141/Cys209, Cys173/Cys188, and Cys199/Cys224. Catalysis depends on charge relay system residues His64 and Asp109. N-linked (GlcNAc...) asparagine glycosylation is found at Asn120 and Asn121. Ser203 (charge relay system) is an active-site residue.

It belongs to the peptidase S1 family. Snake venom subfamily. In terms of assembly, monomer. As to expression, expressed by the venom gland.

Its subcellular location is the secreted. In terms of biological role, snake venom serine protease that may act in the hemostasis system of the prey. In Trimeresurus stejnegeri (Chinese green tree viper), this protein is Snake venom serine protease KN2.